The sequence spans 374 residues: 5-pentadecatrienyl resorcinol O-methyltransferase (374 aa).

The S-adenosyl-L-methionine site is built by D239, D261, M262, and K275. H279 serves as the catalytic Proton acceptor.

Belongs to the class I-like SAM-binding methyltransferase superfamily. Cation-independent O-methyltransferase family. COMT subfamily. As to quaternary structure, homodimer. In terms of tissue distribution, expressed predominantly in root hairs.

The catalysed reaction is (8Z,11Z)-5-(pentadeca-8,11,14-trien-1-yl)resorcinol + S-adenosyl-L-methionine = (8Z,11Z)-5-(pentadeca- 8,11,14-trien-1-yl)resorcinol-3-methyl ether + S-adenosyl-L-homocysteine + H(+). In terms of biological role, O-methyltransferase involved in the biosynthetic pathway of the phytotoxin sorgoleone, a potent broad-spectrum inhibitor active against many agronomically important monocot and dicot weed species. Substrate specificity for alkylresorcinols. Strong preference for a five carbons alkyl side chain. This is 5-pentadecatrienyl resorcinol O-methyltransferase (OMT3) from Sorghum bicolor (Sorghum).